A 258-amino-acid chain; its full sequence is Glutamate racemase (258 aa).

Residues 11 to 12 and 43 to 44 contribute to the substrate site; these read DS and YG. Cys74 functions as the Proton donor/acceptor in the catalytic mechanism. 75–76 provides a ligand contact to substrate; sequence NT. Cys187 acts as the Proton donor/acceptor in catalysis. Substrate is bound at residue 188–189; it reads TH.

Belongs to the aspartate/glutamate racemases family.

The enzyme catalyses L-glutamate = D-glutamate. It participates in cell wall biogenesis; peptidoglycan biosynthesis. Functionally, provides the (R)-glutamate required for cell wall biosynthesis. This chain is Glutamate racemase, found in Bifidobacterium animalis subsp. lactis (strain AD011).